The following is a 369-amino-acid chain: Aminomethyltransferase (369 aa).

Belongs to the GcvT family. In terms of assembly, the glycine cleavage system is composed of four proteins: P, T, L and H.

It catalyses the reaction N(6)-[(R)-S(8)-aminomethyldihydrolipoyl]-L-lysyl-[protein] + (6S)-5,6,7,8-tetrahydrofolate = N(6)-[(R)-dihydrolipoyl]-L-lysyl-[protein] + (6R)-5,10-methylene-5,6,7,8-tetrahydrofolate + NH4(+). Its function is as follows. The glycine cleavage system catalyzes the degradation of glycine. The chain is Aminomethyltransferase from Xanthomonas oryzae pv. oryzae (strain PXO99A).